The sequence spans 354 residues: MTGHPDCPGFDDLPRAHGEVTCRGRIRVSPEDFRVDEILGFEPTGQGEHAFLHIRKTGENTDHVAQRIARLAGVKPMDVGYAGLKDRHAVTTQWFSVRLAGKADPDWRALESESIAVLRHTRHDRKLKRGALAGNRFRIILRGLEGVCDGLEARCAAIRAAGVPNYFGPQRFGHGGRNLQEALRLFADPRRRIDRNKRSLYLSAARSYLFNRVLAGRVEHGSWNRGVEGDAFMFTGSNAFFKTDKLDEDIQRRVEALTIHPSGTLWGRGDPVISGTALAMERVALAQCAEFREGLERCGLEVGRRALRLPVPDLEFAGVEDSACELTFSLPAGTYATTVLRELVEFDPQGWPDT.

Catalysis depends on Asp-86, which acts as the Nucleophile. Positions 162 to 309 (GVPNYFGPQR…LEVGRRALRL (148 aa)) constitute a TRUD domain.

This sequence belongs to the pseudouridine synthase TruD family.

It carries out the reaction uridine(13) in tRNA = pseudouridine(13) in tRNA. Its function is as follows. Responsible for synthesis of pseudouridine from uracil-13 in transfer RNAs. The chain is tRNA pseudouridine synthase D from Methylococcus capsulatus (strain ATCC 33009 / NCIMB 11132 / Bath).